The sequence spans 179 residues: Putative FBD-associated F-box protein At3g12840 (179 aa).

The F-box domain maps to alanine 14 to aspartate 60. One can recognise an FBD domain in the interval lysine 101–threonine 152.

The polypeptide is Putative FBD-associated F-box protein At3g12840 (Arabidopsis thaliana (Mouse-ear cress)).